A 64-amino-acid chain; its full sequence is Anti-sigma-G factor Gin (64 aa).

Zn(2+) is bound by residues Cys-11, Cys-14, Cys-30, and Cys-33.

Probably functions as a homodimer. Interacts with sigma-G factor, recognition occurs via the first 71 residues of sigma-G. Requires Zn(2+) as cofactor.

An anti-sigma-G factor, prevents premature activation of sigma-G factor in the forespore; overexpression leads to 1000-fold reduction in spore formation, spore formation stops after engulfment. Overexpression also inhibits sigma-G transcription activation activity. When both Gin and sigma-G are expressed in E.coli Gin inhibits sigma-G, strongly suggesting Gin inhibits by direct physical interaction. This chain is Anti-sigma-G factor Gin, found in Bacillus subtilis (strain 168).